Reading from the N-terminus, the 1088-residue chain is Leucine-rich repeat receptor-like protein kinase PEPR2 (1088 aa).

The N-terminal stretch at 1-26 is a signal peptide; that stretch reads MRNLGLLEITLLCSLFVYFRIDSVSS. At 27 to 739 the chain is on the extracellular side; it reads LNSDGLALLS…QVKLSTWKIA (713 aa). N-linked (GlcNAc...) asparagine glycans are attached at residues Asn-55, Asn-82, and Asn-122. LRR repeat units lie at residues 75–99, 100–122, 123–146, 147–170, 172–194, 195–219, 221–243, 244–267, 269–291, 292–315, 316–339, 341–363, 365–387, 388–411, 412–435, 436–459, 460–485, 487–506, 507–529, 530–554, 556–577, 578–602, 603–627, 629–651, 652–676, and 678–698; these read GNVV…IGEL, KSLV…TLGN, CTSL…IFGS, LQNL…SVGG, IELV…LLGN, CSKL…LYLL, NLGE…SSNC, KKLV…IGNC, SLHS…MGML, RKVS…LGNC, SSLE…LSKL, KLQS…IWKI, SLTQ…VTQL, KHLK…LGLN, RSLE…LCHG, QKLR…IRQC, KTLE…SLSL, YVNL…LGSC, KNLL…ELGN, LQSL…LSGC, RLLY…SFRS, WKSL…LAEL, DRLS…GLLK, LRYG…LGAL, INLE…SLKS, and NQVD…LLSN. 9 N-linked (GlcNAc...) asparagine glycosylation sites follow: Asn-149, Asn-159, Asn-183, Asn-194, Asn-209, Asn-229, Asn-266, Asn-279, and Asn-314. N-linked (GlcNAc...) asparagine glycosylation is found at Asn-373 and Asn-411. Asn-537 and Asn-568 each carry an N-linked (GlcNAc...) asparagine glycan. 2 N-linked (GlcNAc...) asparagine glycosylation sites follow: Asn-658 and Asn-698. A helical transmembrane segment spans residues 740–760; sequence LIAAGSSLSVLALLFALFLVL. The Cytoplasmic portion of the chain corresponds to 761–1088; sequence CRCKRGTKTE…FVRSTSGSVH (328 aa). Position 791 is a phosphothreonine (Thr-791). The Protein kinase domain occupies 794–1080; sequence LDDKYIIGRG…KDLTDLESFV (287 aa). ATP is bound by residues 800 to 808 and Lys-822; that span reads IGRGAHGVV. 2 positions are modified to phosphotyrosine: Tyr-868 and Tyr-908. The Proton acceptor role is filled by Asp-921. A phosphotyrosine mark is found at Tyr-962 and Tyr-969.

This sequence belongs to the protein kinase superfamily. Ser/Thr protein kinase family. As to quaternary structure, interacts with BAK1. Interacts with CLE14.

It is found in the cell membrane. The catalysed reaction is L-seryl-[protein] + ATP = O-phospho-L-seryl-[protein] + ADP + H(+). The enzyme catalyses L-threonyl-[protein] + ATP = O-phospho-L-threonyl-[protein] + ADP + H(+). Acts as a receptor for PEP defense peptides. Unlike typical immune receptors, senses an endogenous elicitor that potentiates PAMP-inducible plant responses. The protein is Leucine-rich repeat receptor-like protein kinase PEPR2 (PEPR2) of Arabidopsis thaliana (Mouse-ear cress).